Consider the following 194-residue polypeptide: Ribonuclease HII (194 aa).

In terms of domain architecture, RNase H type-2 spans 3 to 193; it reads ILTAGVDEAG…VRNLLAQQAL (191 aa). A divalent metal cation contacts are provided by aspartate 9, glutamate 10, and aspartate 101.

This sequence belongs to the RNase HII family. It depends on Mn(2+) as a cofactor. Requires Mg(2+) as cofactor.

It is found in the cytoplasm. The enzyme catalyses Endonucleolytic cleavage to 5'-phosphomonoester.. In terms of biological role, endonuclease that specifically degrades the RNA of RNA-DNA hybrids. The protein is Ribonuclease HII of Neisseria gonorrhoeae (strain ATCC 700825 / FA 1090).